A 216-amino-acid chain; its full sequence is MALCLKQVFSKDKTFRPRKRFEPGTQRFELYKKAQASLKSGLDLRSVVRLPPGENIDDWIAVHVVDFFNRINLIYGTMAERCSETSCPVMAGGPRYEYRWQDERQYRRPAKLSAPRYMALLMDWIESLINDEDVFPTRVGVPFPKNFQQVCTKILTRLFRVFVHVYIHHFDSILSMGAEAHVNTCYKHFYYFIREFSLVDQRELEPLREMTERICH.

Positions 82, 87, 164, and 169 each coordinate Zn(2+).

The protein belongs to the MOB1/phocein family.

Functionally, may regulate the activity of kinases. The sequence is that of MOB kinase activator 3C (MOB3C) from Bos taurus (Bovine).